A 589-amino-acid polypeptide reads, in one-letter code: Lipoprotein LpqB (589 aa).

The signal sequence occupies residues 1-20 (MMRGVLVIMRLLCLGMLFTG). A lipid anchor (N-palmitoyl cysteine) is attached at cysteine 21. The S-diacylglycerol cysteine moiety is linked to residue cysteine 21.

It belongs to the LpqB lipoprotein family.

It is found in the cell membrane. The chain is Lipoprotein LpqB from Mycobacterium leprae (strain TN).